A 74-amino-acid polypeptide reads, in one-letter code: Small ribosomal subunit protein uS15 (74 aa).

Belongs to the universal ribosomal protein uS15 family. As to quaternary structure, part of the 30S ribosomal subunit. Forms a bridge to the 50S subunit in the 70S ribosome, contacting the 23S rRNA.

Its function is as follows. One of the primary rRNA binding proteins, it binds directly to 16S rRNA where it helps nucleate assembly of the platform of the 30S subunit by binding and bridging several RNA helices of the 16S rRNA. In terms of biological role, forms an intersubunit bridge (bridge B4) with the 23S rRNA of the 50S subunit in the ribosome. The chain is Small ribosomal subunit protein uS15 from Aster yellows witches'-broom phytoplasma (strain AYWB).